The chain runs to 97 residues: UPF0250 protein RSc0326 (97 aa).

The protein belongs to the UPF0250 family.

This is UPF0250 protein RSc0326 from Ralstonia nicotianae (strain ATCC BAA-1114 / GMI1000) (Ralstonia solanacearum).